A 212-amino-acid polypeptide reads, in one-letter code: External core antigen (212 aa).

A signal peptide spans 1 to 19 (MQLFHLCLVISCSCPTVQA). Residues 25–27 (GWL) form an HBEAG region. Residues 165 to 212 (NAPILSTLPETTVVRRRGRSPRRRTPSPRRRRSQSPRRRRSQSRESQC) form a disordered region. A compositionally biased stretch (basic residues) spans 178 to 205 (VRRRGRSPRRRTPSPRRRRSQSPRRRRS). A 1; half-length repeat occupies 184–190 (SPRRRTP). A 3 X 8 AA repeats of S-P-R-R-R-R-S-Q region spans residues 184–206 (SPRRRTPSPRRRRSQSPRRRRSQ). The propeptide occupies 184–212 (SPRRRTPSPRRRRSQSPRRRRSQSRESQC). 2 consecutive repeat copies span residues 191-198 (SPRRRRSQ) and 199-206 (SPRRRRSQ).

The protein belongs to the orthohepadnavirus precore antigen family. In terms of assembly, homodimerizes. Phosphorylated. Post-translationally, cleaved by host furin.

It is found in the secreted. It localises to the host nucleus. In terms of biological role, may regulate immune response to the intracellular capsid in acting as a T-cell tolerogen, by having an immunoregulatory effect which prevents destruction of infected cells by cytotoxic T-cells. This immune regulation may predispose to chronicity during perinatal infections and prevent severe liver injury during adult infections. This chain is External core antigen, found in Hepatitis B virus genotype B1 subtype adw (isolate Japan/pJDW233/1988) (HBV-B).